Consider the following 227-residue polypeptide: LexA repressor (227 aa).

A DNA-binding region (H-T-H motif) is located at residues 25–45 (FDEMKDALDLRSKSGIHRLIT). Active-site for autocatalytic cleavage activity residues include Ser-148 and Lys-186.

It belongs to the peptidase S24 family. Homodimer.

It catalyses the reaction Hydrolysis of Ala-|-Gly bond in repressor LexA.. Functionally, represses a number of genes involved in the response to DNA damage (SOS response), including recA and lexA. In the presence of single-stranded DNA, RecA interacts with LexA causing an autocatalytic cleavage which disrupts the DNA-binding part of LexA, leading to derepression of the SOS regulon and eventually DNA repair. This is LexA repressor from Cereibacter sphaeroides (strain ATCC 17029 / ATH 2.4.9) (Rhodobacter sphaeroides).